The following is a 184-amino-acid chain: Autophagy-related protein 101 (184 aa).

This sequence belongs to the ATG101 family. In terms of assembly, component of the atg1 kinase complex composed of at least atg1, atg13, atg17 and atg101. Interacts directly with atg13.

It localises to the cytoplasm. It is found in the nucleus. The protein resides in the preautophagosomal structure membrane. Its function is as follows. Autophagy factor required for autophagosome formation. Component of the atg1 kinase complex in which it stabilizes atg13. Is also responsible for recruiting downstream factors to the autophagosome-formation site. Has a role in meiosis and sporulation. This chain is Autophagy-related protein 101, found in Schizosaccharomyces pombe (strain 972 / ATCC 24843) (Fission yeast).